The primary structure comprises 440 residues: tRNA-2-methylthio-N(6)-dimethylallyladenosine synthase (440 aa).

The MTTase N-terminal domain maps to 2-117 (KGLYIKTYGC…LPELIVKASR (116 aa)). [4Fe-4S] cluster contacts are provided by Cys-11, Cys-47, Cys-80, Cys-157, Cys-161, and Cys-164. The 232-residue stretch at 143–374 (NSQGSSAFLA…QELISKQQLE (232 aa)) folds into the Radical SAM core domain. Residues 377–440 (QSMIGKTIPV…RQNSLLGCAA (64 aa)) form the TRAM domain.

It belongs to the methylthiotransferase family. MiaB subfamily. As to quaternary structure, monomer. Requires [4Fe-4S] cluster as cofactor.

It localises to the cytoplasm. The enzyme catalyses N(6)-dimethylallyladenosine(37) in tRNA + (sulfur carrier)-SH + AH2 + 2 S-adenosyl-L-methionine = 2-methylsulfanyl-N(6)-dimethylallyladenosine(37) in tRNA + (sulfur carrier)-H + 5'-deoxyadenosine + L-methionine + A + S-adenosyl-L-homocysteine + 2 H(+). Catalyzes the methylthiolation of N6-(dimethylallyl)adenosine (i(6)A), leading to the formation of 2-methylthio-N6-(dimethylallyl)adenosine (ms(2)i(6)A) at position 37 in tRNAs that read codons beginning with uridine. The sequence is that of tRNA-2-methylthio-N(6)-dimethylallyladenosine synthase from Wolbachia pipientis subsp. Culex pipiens (strain wPip).